Consider the following 369-residue polypeptide: Endophilin-A (369 aa).

A BAR domain is found at 18–248 (TEKMGGAEGT…LQEKRSEAES (231 aa)). The stretch at 227 to 247 (QCADVLRGLQETLQEKRSEAE) forms a coiled coil. Positions 266–295 (GGGGGLNEDGTPSHISSSASPLPSPMRSPA) are disordered. Residues 277–294 (PSHISSSASPLPSPMRSP) show a composition bias toward low complexity. In terms of domain architecture, SH3 spans 305-364 (QQQPCCQALYDFEPENPGELAFKENDIITLLNRVDDNWFEGAVNGRTGYFPQSYVQVQVP).

The protein belongs to the endophilin family.

The protein resides in the cytoplasm. It is found in the membrane. Required presynaptically at the neuromuscular junction. Implicated in synaptic vesicle endocytosis. The sequence is that of Endophilin-A from Drosophila erecta (Fruit fly).